The following is a 172-amino-acid chain: Large ribosomal subunit protein uL5 (172 aa).

This sequence belongs to the universal ribosomal protein uL5 family. Part of the 50S ribosomal subunit; contacts the 5S rRNA and probably tRNA. Forms a bridge to the 30S subunit in the 70S ribosome.

Its function is as follows. This is one of the proteins that bind and probably mediate the attachment of the 5S RNA into the large ribosomal subunit, where it forms part of the central protuberance. In the 70S ribosome it contacts protein S13 of the 30S subunit (bridge B1b), connecting the 2 subunits; this bridge is implicated in subunit movement. May contact the P site tRNA; the 5S rRNA and some of its associated proteins might help stabilize positioning of ribosome-bound tRNAs. The sequence is that of Large ribosomal subunit protein uL5 from Haloferax mediterranei (strain ATCC 33500 / DSM 1411 / JCM 8866 / NBRC 14739 / NCIMB 2177 / R-4) (Halobacterium mediterranei).